The following is a 128-amino-acid chain: Glycine cleavage system H protein (128 aa).

Residues 25 to 107 (TITVGITHHA…YGAGWFFKLK (83 aa)) enclose the Lipoyl-binding domain. Lys66 carries the N6-lipoyllysine modification.

This sequence belongs to the GcvH family. The glycine cleavage system is composed of four proteins: P, T, L and H. Requires (R)-lipoate as cofactor.

Functionally, the glycine cleavage system catalyzes the degradation of glycine. The H protein shuttles the methylamine group of glycine from the P protein to the T protein. This Neisseria meningitidis serogroup B (strain ATCC BAA-335 / MC58) protein is Glycine cleavage system H protein.